Here is a 265-residue protein sequence, read N- to C-terminus: Hydroxyethylthiazole kinase (265 aa).

Position 44 (methionine 44) interacts with substrate. The ATP site is built by lysine 120 and serine 166. Residue glycine 193 participates in substrate binding.

It belongs to the Thz kinase family. The cofactor is Mg(2+).

It catalyses the reaction 5-(2-hydroxyethyl)-4-methylthiazole + ATP = 4-methyl-5-(2-phosphooxyethyl)-thiazole + ADP + H(+). It participates in cofactor biosynthesis; thiamine diphosphate biosynthesis; 4-methyl-5-(2-phosphoethyl)-thiazole from 5-(2-hydroxyethyl)-4-methylthiazole: step 1/1. Its function is as follows. Catalyzes the phosphorylation of the hydroxyl group of 4-methyl-5-beta-hydroxyethylthiazole (THZ). The polypeptide is Hydroxyethylthiazole kinase (Methanosphaerula palustris (strain ATCC BAA-1556 / DSM 19958 / E1-9c)).